The following is a 644-amino-acid chain: 1-deoxy-D-xylulose-5-phosphate synthase (644 aa).

Thiamine diphosphate is bound by residues His78 and 120–122 (GHA). Asp149 lines the Mg(2+) pocket. Thiamine diphosphate contacts are provided by residues 150–151 (AA), Asn178, and Glu373. A Mg(2+)-binding site is contributed by Asn178.

Belongs to the transketolase family. DXPS subfamily. Homodimer. Mg(2+) serves as cofactor. The cofactor is thiamine diphosphate.

It carries out the reaction D-glyceraldehyde 3-phosphate + pyruvate + H(+) = 1-deoxy-D-xylulose 5-phosphate + CO2. The protein operates within metabolic intermediate biosynthesis; 1-deoxy-D-xylulose 5-phosphate biosynthesis; 1-deoxy-D-xylulose 5-phosphate from D-glyceraldehyde 3-phosphate and pyruvate: step 1/1. Catalyzes the acyloin condensation reaction between C atoms 2 and 3 of pyruvate and glyceraldehyde 3-phosphate to yield 1-deoxy-D-xylulose-5-phosphate (DXP). The protein is 1-deoxy-D-xylulose-5-phosphate synthase of Chlamydia caviae (strain ATCC VR-813 / DSM 19441 / 03DC25 / GPIC) (Chlamydophila caviae).